The sequence spans 457 residues: Exodeoxyribonuclease 7 large subunit (457 aa).

Belongs to the XseA family. In terms of assembly, heterooligomer composed of large and small subunits.

The protein localises to the cytoplasm. It catalyses the reaction Exonucleolytic cleavage in either 5'- to 3'- or 3'- to 5'-direction to yield nucleoside 5'-phosphates.. In terms of biological role, bidirectionally degrades single-stranded DNA into large acid-insoluble oligonucleotides, which are then degraded further into small acid-soluble oligonucleotides. In Photorhabdus laumondii subsp. laumondii (strain DSM 15139 / CIP 105565 / TT01) (Photorhabdus luminescens subsp. laumondii), this protein is Exodeoxyribonuclease 7 large subunit.